A 715-amino-acid polypeptide reads, in one-letter code: SANT and BTB domain regulator of class switch recombination (715 aa).

The SANT domain maps to 21–59; it reads DMILCSLVGVPQPISWDSVARLVPGYTPKECAKRFEELK. The region spanning 146–254 is the BTB domain; that stretch reads MVIHVCDEAK…ECIRYCHKNM (109 aa). A compositionally biased stretch (acidic residues) spans 552–573; it reads SEEEDYTTGSEVTEDEVGDEEE. Disordered stretches follow at residues 552 to 623 and 689 to 715; these read SEEE…VSLQ and SAHS…GRPT. A compositionally biased stretch (basic residues) spans 578-605; sequence QAGRKVKPKRSAKQTKKHISSPSIHKKE. 2 stretches are compositionally biased toward polar residues: residues 614-623 and 690-699; these read DSSPFTVSLQ and AHSNTRQMNT.

Belongs to the KIAA1841 family. As to quaternary structure, homodimer.

Functionally, negatively regulates class switch recombination or isotype switching in splenic B-cells. This chain is SANT and BTB domain regulator of class switch recombination, found in Xenopus laevis (African clawed frog).